Reading from the N-terminus, the 331-residue chain is Pantothenate kinase (331 aa).

109 to 116 (GSVAVGKS) is an ATP binding site.

The protein belongs to the prokaryotic pantothenate kinase family.

It localises to the cytoplasm. It carries out the reaction (R)-pantothenate + ATP = (R)-4'-phosphopantothenate + ADP + H(+). Its pathway is cofactor biosynthesis; coenzyme A biosynthesis; CoA from (R)-pantothenate: step 1/5. In Rhizobium leguminosarum bv. trifolii (strain WSM2304), this protein is Pantothenate kinase.